Reading from the N-terminus, the 555-residue chain is Probable ferredoxin/ferredoxin--NADP reductase (555 aa).

4Fe-4S ferredoxin-type domains lie at 2-29 and 37-66; these read PYII…PTPD and EMLY…SDTR. [4Fe-4S] cluster contacts are provided by Cys9, Cys15, Cys19, Cys46, Cys49, Cys52, and Cys56. The tract at residues 115–555 is ferredoxin--NADP reductase; sequence VAIVGSGPAA…APPLRLRALS (441 aa). 4 residues coordinate FAD: Ala123, Glu143, Leu151, and Ile187. NADP(+) is bound by residues Arg213, 258–261, 302–303, and Glu314; these read NGNV and RR. Residues Trp453 and 460–462 contribute to the FAD site; that span reads GFI. An NADP(+)-binding site is contributed by Gly460.

It in the C-terminal section; belongs to the ferredoxin--NADP reductase family. [4Fe-4S] cluster serves as cofactor. The cofactor is FAD.

It catalyses the reaction 2 reduced [2Fe-2S]-[ferredoxin] + NADP(+) + H(+) = 2 oxidized [2Fe-2S]-[ferredoxin] + NADPH. The polypeptide is Probable ferredoxin/ferredoxin--NADP reductase (fprB) (Mycobacterium leprae (strain TN)).